Reading from the N-terminus, the 263-residue chain is Outer membrane protein OmpK (263 aa).

The first 20 residues, 1–20 (MRKSLLALSLLAATSAPVLA), serve as a signal peptide directing secretion.

This sequence belongs to the nucleoside-specific channel-forming outer membrane porin (Tsx) (TC 1.B.10) family.

Its subcellular location is the cell outer membrane. Serves as receptor for a broad-host-range vibriophage, KVP40. The protein is Outer membrane protein OmpK of Vibrio parahaemolyticus.